Reading from the N-terminus, the 427-residue chain is UPF0597 protein CPF_0803 (427 aa).

It belongs to the UPF0597 family.

The sequence is that of UPF0597 protein CPF_0803 from Clostridium perfringens (strain ATCC 13124 / DSM 756 / JCM 1290 / NCIMB 6125 / NCTC 8237 / Type A).